The following is a 98-amino-acid chain: uncharacterized protein (98 aa).

Belongs to the IS150/IS1296 orfA family.

This is an uncharacterized protein from Haemophilus influenzae (strain ATCC 51907 / DSM 11121 / KW20 / Rd).